The primary structure comprises 798 residues: Phenylalanine--tRNA ligase beta subunit (798 aa).

Residues 38–148 (IGNYEKVVVG…PEAPVGEKIE (111 aa)) enclose the tRNA-binding domain. The 76-residue stretch at 400-475 (FTPKVIAVSL…RYLGYNNFPD (76 aa)) folds into the B5 domain. 4 residues coordinate Mg(2+): Asp-453, Asp-459, Glu-462, and Glu-463. The FDX-ACB domain occupies 703–796 (SPYPEVKRDI…LEAKTGAKLR (94 aa)).

This sequence belongs to the phenylalanyl-tRNA synthetase beta subunit family. Type 1 subfamily. In terms of assembly, tetramer of two alpha and two beta subunits. Requires Mg(2+) as cofactor.

Its subcellular location is the cytoplasm. It carries out the reaction tRNA(Phe) + L-phenylalanine + ATP = L-phenylalanyl-tRNA(Phe) + AMP + diphosphate + H(+). This Carboxydothermus hydrogenoformans (strain ATCC BAA-161 / DSM 6008 / Z-2901) protein is Phenylalanine--tRNA ligase beta subunit.